The sequence spans 264 residues: Ribosomal RNA small subunit methyltransferase J (264 aa).

S-adenosyl-L-methionine is bound by residues Arg111 to Asp112, Glu127 to Arg128, and Asp180.

This sequence belongs to the methyltransferase superfamily. RsmJ family.

The protein localises to the cytoplasm. It catalyses the reaction guanosine(1516) in 16S rRNA + S-adenosyl-L-methionine = N(2)-methylguanosine(1516) in 16S rRNA + S-adenosyl-L-homocysteine + H(+). Functionally, specifically methylates the guanosine in position 1516 of 16S rRNA. This chain is Ribosomal RNA small subunit methyltransferase J, found in Alkalilimnicola ehrlichii (strain ATCC BAA-1101 / DSM 17681 / MLHE-1).